Reading from the N-terminus, the 147-residue chain is Holo-[acyl-carrier-protein] synthase (147 aa).

Residues aspartate 7 and glutamate 60 each coordinate Mg(2+).

The protein belongs to the P-Pant transferase superfamily. AcpS family. It depends on Mg(2+) as a cofactor.

The protein localises to the cytoplasm. The catalysed reaction is apo-[ACP] + CoA = holo-[ACP] + adenosine 3',5'-bisphosphate + H(+). Functionally, transfers the 4'-phosphopantetheine moiety from coenzyme A to a Ser of acyl-carrier-protein. The protein is Holo-[acyl-carrier-protein] synthase of Bifidobacterium animalis subsp. lactis (strain AD011).